The primary structure comprises 339 residues: Tryptophan--tRNA ligase (339 aa).

ATP contacts are provided by residues 11–13 (QPT) and 19–20 (GN). Positions 12–20 (PTGAIHIGN) match the 'HIGH' region motif. An L-tryptophan-binding site is contributed by D135. ATP contacts are provided by residues 147–149 (GED), I191, and 200–204 (KMSKS). The 'KMSKS' region motif lies at 200 to 204 (KMSKS).

The protein belongs to the class-I aminoacyl-tRNA synthetase family. As to quaternary structure, homodimer.

The protein localises to the cytoplasm. The catalysed reaction is tRNA(Trp) + L-tryptophan + ATP = L-tryptophyl-tRNA(Trp) + AMP + diphosphate + H(+). Catalyzes the attachment of tryptophan to tRNA(Trp). The chain is Tryptophan--tRNA ligase from Prochlorococcus marinus (strain SARG / CCMP1375 / SS120).